Consider the following 417-residue polypeptide: uncharacterized protein (417 aa).

2 disordered regions span residues 1–41 (MDSE…EDQA) and 233–262 (QDSAYNDQAPSTSYHHHHHEQLEAGKSTRS). A compositionally biased stretch (basic and acidic residues) spans 31–41 (DEDHIFHEDQA). Over residues 235–245 (SAYNDQAPSTS) the composition is skewed to polar residues.

This is an uncharacterized protein from Caenorhabditis elegans.